The primary structure comprises 156 residues: Small ribosomal subunit protein uS7 (156 aa).

This sequence belongs to the universal ribosomal protein uS7 family. As to quaternary structure, part of the 30S ribosomal subunit. Contacts proteins S9 and S11.

Functionally, one of the primary rRNA binding proteins, it binds directly to 16S rRNA where it nucleates assembly of the head domain of the 30S subunit. Is located at the subunit interface close to the decoding center, probably blocks exit of the E-site tRNA. This Idiomarina loihiensis (strain ATCC BAA-735 / DSM 15497 / L2-TR) protein is Small ribosomal subunit protein uS7.